The primary structure comprises 387 residues: Na(+)/H(+) antiporter NhaA (387 aa).

12 consecutive transmembrane segments (helical) span residues Ala16–Ile36, Ile53–Leu73, Leu89–Phe109, Gly118–Gly138, Val147–Phe167, Gly171–Asn191, Ile197–Val217, Thr220–Ile240, Pro251–Ser271, Ile283–Ile303, Val321–Leu341, and Ile354–Thr374.

It belongs to the NhaA Na(+)/H(+) (TC 2.A.33) antiporter family.

It is found in the cell inner membrane. It carries out the reaction Na(+)(in) + 2 H(+)(out) = Na(+)(out) + 2 H(+)(in). In terms of biological role, na(+)/H(+) antiporter that extrudes sodium in exchange for external protons. This chain is Na(+)/H(+) antiporter NhaA, found in Cytophaga hutchinsonii (strain ATCC 33406 / DSM 1761 / CIP 103989 / NBRC 15051 / NCIMB 9469 / D465).